The sequence spans 183 residues: Transmembrane protein 154 (183 aa).

Residues 1-22 (MQAPRAALVFALVIALVPVGRG) form the signal peptide. The Extracellular portion of the chain corresponds to 23–75 (NYEELENSGDTTVESERPNKVTIPSTFAAVTIKETLNANINSTNFAPDENQLE). The helical transmembrane segment at 76–96 (FILMVLIPLILLVLLLLSVVF) threads the bilayer. Residues 97 to 183 (LATYYKRKRT…SNHNPSDSES (87 aa)) are Cytoplasmic-facing. A disordered region spans residues 163 to 183 (ECLPTLKEEKESNHNPSDSES). Residue Ser-179 is modified to Phosphoserine.

It is found in the membrane. The polypeptide is Transmembrane protein 154 (TMEM154) (Homo sapiens (Human)).